The primary structure comprises 332 residues: Homoarginine-6-hydroxylase 2-ODD-C23.1 (332 aa).

Positions 182–287 (PFWVMRLIGY…RVCVAFFYET (106 aa)) constitute a Fe2OG dioxygenase domain. Residues H210, D212, and H268 each contribute to the Fe cation site. 2-oxoglutarate is bound at residue R278.

Belongs to the iron/ascorbate-dependent oxidoreductase family. It depends on Fe(2+) as a cofactor.

The protein localises to the cytoplasm. It localises to the cytosol. It carries out the reaction L-homoarginine + 2-oxoglutarate + O2 = 6-hydroxy-L-homoarginine + succinate + CO2. Slightly inhibited by canavanine (Can), the 5-oxa-analog of arginine. Its function is as follows. 2-oxoglutarate-dependent dioxygenase catalyzing homoarginine 6-hydroxylation thus producing 6-hydroxy-L-homoarginine. Guanidine (Gd) is in turn synthesized by the spontaneous conversion of 6-hydroxy-L-homoarginine to (S)-2-amino-6-oxohexanoate (RHEA:79843); guanidine is a nitrogen-rich compound that can serve as a defense or signaling substance. In Arabidopsis thaliana (Mouse-ear cress), this protein is Homoarginine-6-hydroxylase 2-ODD-C23.1.